The sequence spans 257 residues: N-acetylglucosaminyldiphosphoundecaprenol N-acetyl-beta-D-mannosaminyltransferase (257 aa).

It belongs to the glycosyltransferase 26 family. TagA/TarA subfamily.

It carries out the reaction UDP-N-acetyl-alpha-D-mannosamine + N-acetyl-alpha-D-glucosaminyl-di-trans,octa-cis-undecaprenyl diphosphate = N-acetyl-beta-D-mannosaminyl-(1-&gt;4)-N-acetyl-alpha-D-glucosaminyl di-trans,octa-cis-undecaprenyl diphosphate + UDP + H(+). It functions in the pathway cell wall biogenesis; poly(ribitol phosphate) teichoic acid biosynthesis. Functionally, catalyzes the conversion of GlcNAc-PP-undecaprenol into ManNAc-GlcNAc-PP-undecaprenol, the first committed lipid intermediate in the de novo synthesis of teichoic acid. The polypeptide is N-acetylglucosaminyldiphosphoundecaprenol N-acetyl-beta-D-mannosaminyltransferase (Bacillus spizizenii (strain ATCC 23059 / NRRL B-14472 / W23) (Bacillus subtilis subsp. spizizenii)).